A 1489-amino-acid chain; its full sequence is Chromatin-remodeling ATPase INO80 (1489 aa).

3 positions are modified to phosphoserine: serine 65, serine 115, and serine 133. Disordered regions lie at residues 137–311 (NEKD…KLSM) and 393–452 (KRER…GLPT). 2 stretches are compositionally biased toward acidic residues: residues 140–164 (DADE…EDEA) and 214–291 (DENE…DFNP). The segment covering 301–311 (SSSSSSTKLSM) has biased composition (low complexity). A compositionally biased stretch (basic and acidic residues) spans 393–402 (KREREREEAL). The 126-residue stretch at 476-601 (IWKDMARKDS…SHFIGRKIKT (126 aa)) folds into the DBINO domain. Serine 610 is subject to Phosphoserine. The region spanning 718–890 (ANLYDQGING…WALLHFIMPS (173 aa)) is the Helicase ATP-binding domain. ATP is bound at residue 731–738 (DEMGLGKT). The DEAQ box signature appears at 841–844 (DEAQ). The Helicase C-terminal domain maps to 1303 to 1467 (KLDELLVKLK…TIEVGENDSE (165 aa)). A disordered region spans residues 1456–1489 (IKTIEVGENDSEVTREGSKSISQDGIKEAASALA).

The protein belongs to the SNF2/RAD54 helicase family. In terms of assembly, component of the chromatin-remodeling INO80 complex, at least composed of ARP4, ARP5, ARP8, RVB1, RVB2, TAF14, NHP10, IES1, IES3, IES4, IES6, ACT1, IES2, IES5 and INO80.

It is found in the nucleus. It catalyses the reaction ATP + H2O = ADP + phosphate + H(+). Its function is as follows. ATPase component of the INO80 complex which remodels chromatin by shifting nucleosomes and is involved in DNA repair. Its ability to induce transcription of some phosphate-responsive genes is modulated by inositol polyphosphates. The INO80 complex is involved in DNA repair by associating with 'Ser-129' phosphorylated H2A histones as a response to DNA damage. In Saccharomyces cerevisiae (strain ATCC 204508 / S288c) (Baker's yeast), this protein is Chromatin-remodeling ATPase INO80 (INO80).